Here is an 80-residue protein sequence, read N- to C-terminus: MKNNINLQDVFLNQVRKENIGITIFLVNGFQLKGFVRGFDNYTIVLDSDGKQQMIYKHAVSTISPNSPVNFSAALKKIND.

Positions 9–69 (DVFLNQVRKE…VSTISPNSPV (61 aa)) constitute a Sm domain.

It belongs to the Hfq family. Homohexamer.

RNA chaperone that binds small regulatory RNA (sRNAs) and mRNAs to facilitate mRNA translational regulation in response to envelope stress, environmental stress and changes in metabolite concentrations. Also binds with high specificity to tRNAs. The sequence is that of RNA-binding protein Hfq from Alkaliphilus oremlandii (strain OhILAs) (Clostridium oremlandii (strain OhILAs)).